A 293-amino-acid chain; its full sequence is GTP cyclohydrolase FolE2 (293 aa).

The protein belongs to the GTP cyclohydrolase IV family.

It carries out the reaction GTP + H2O = 7,8-dihydroneopterin 3'-triphosphate + formate + H(+). It functions in the pathway cofactor biosynthesis; 7,8-dihydroneopterin triphosphate biosynthesis; 7,8-dihydroneopterin triphosphate from GTP: step 1/1. Its function is as follows. Converts GTP to 7,8-dihydroneopterin triphosphate. This is GTP cyclohydrolase FolE2 from Pseudomonas entomophila (strain L48).